Here is a 430-residue protein sequence, read N- to C-terminus: tRNA(Ile)-lysidine synthase (430 aa).

21-26 (SGGLDS) provides a ligand contact to ATP.

It belongs to the tRNA(Ile)-lysidine synthase family.

The protein localises to the cytoplasm. It carries out the reaction cytidine(34) in tRNA(Ile2) + L-lysine + ATP = lysidine(34) in tRNA(Ile2) + AMP + diphosphate + H(+). Its function is as follows. Ligates lysine onto the cytidine present at position 34 of the AUA codon-specific tRNA(Ile) that contains the anticodon CAU, in an ATP-dependent manner. Cytidine is converted to lysidine, thus changing the amino acid specificity of the tRNA from methionine to isoleucine. In Salmonella typhimurium (strain LT2 / SGSC1412 / ATCC 700720), this protein is tRNA(Ile)-lysidine synthase.